The following is a 1911-amino-acid chain: Adenylate kinase 9 (1911 aa).

An adenylate kinase 1 region spans residues 31–285; sequence VCFVVFGKPG…LFMIVMDRLK (255 aa). Residue 40-45 participates in ATP binding; that stretch reads GVGKTT. Residues 60 to 89 are NMP 1; it reads EALPILEEQIAAETESGVMLQSMLISGQSI. AMP contacts are provided by residues 87–89 and 116–119; these read QSI and EIPS. Positions 160–205 are LID 1; sequence GQRQHNNTGYIYSRDQWDPEVIENHRKKKKEAQKDGKGEEEEEEEE. The interval 185–210 is disordered; the sequence is RKKKKEAQKDGKGEEEEEEEEQEEEE. Residues 197-210 are compositionally biased toward acidic residues; the sequence is GEEEEEEEEQEEEE. Arg-229 contributes to the AMP binding site. Coiled coils occupy residues 443–485 and 676–711; these read AEAT…EFGV and LQKKSEIDSKILERLLEELQKKKKEEEEARKATEEE. Disordered regions lie at residues 728–796 and 892–926; these read KAKE…TEIP and DYEEETEDYQTEAEVDEELEEEEEEEGEDKMKERK. Over residues 733–750 the composition is skewed to acidic residues; that stretch reads EETDNEDEEEIEGDELEV. Residues 751-761 show a composition bias toward basic and acidic residues; that stretch reads HEEPEASHDTR. Acidic residues-rich tracts occupy residues 767–791 and 892–919; these read EEFEASEVPETEPEAVSEPIEETTV and DYEEETEDYQTEAEVDEELEEEEEEEGE. Adenylate kinase stretches follow at residues 992-1203 and 1412-1601; these read LRIC…ELIL and IRII…KNVQ. 1001-1006 provides a ligand contact to ATP; it reads GSGKTM. Positions 1021 to 1052 are NMP 2; the sequence is QFEEVLQEKLLLKTEKKVGPEFEEDSENEQAA. AMP-binding positions include 1050–1052 and 1079–1082; these read QAA and VQLT. An LID 2 region spans residues 1124 to 1144; it reads DGFPRYPEEAQFLGDRGFFPD. Position 1421 to 1426 (1421 to 1426) interacts with ATP; sequence KSGKTT. The segment at 1441–1472 is NMP 3; that stretch reads SIGGALRYVLNNHPETELALMLNWHLHKGMTA. AMP contacts are provided by residues Arg-1447, 1470–1472, 1499–1502, Gln-1506, and Arg-1543; these read MTA and GYPV. The segment at 1536–1550 is LID 3; that stretch reads LEKENEQRLPYPLHN.

It belongs to the adenylate kinase family.

It is found in the cytoplasm. The protein localises to the nucleus. It localises to the cell projection. The protein resides in the cilium. Its subcellular location is the flagellum. It carries out the reaction a ribonucleoside 5'-phosphate + ATP = a ribonucleoside 5'-diphosphate + ADP. It catalyses the reaction AMP + ATP = 2 ADP. The catalysed reaction is GTP + AMP = GDP + ADP. The enzyme catalyses CMP + ATP = CDP + ADP. It carries out the reaction GTP + CMP = CDP + GDP. It catalyses the reaction dAMP + ATP = dADP + ADP. The catalysed reaction is dCMP + ATP = dCDP + ADP. The enzyme catalyses a ribonucleoside 5'-diphosphate + ATP = a ribonucleoside 5'-triphosphate + ADP. It carries out the reaction CDP + ATP = CTP + ADP. It catalyses the reaction CDP + GTP = CTP + GDP. The catalysed reaction is GDP + ATP = GTP + ADP. The enzyme catalyses UDP + ATP = UTP + ADP. It carries out the reaction GTP + UDP = UTP + GDP. It catalyses the reaction dTDP + GTP = dTTP + GDP. The catalysed reaction is dCDP + ATP = dCTP + ADP. The enzyme catalyses dCDP + GTP = dCTP + GDP. It carries out the reaction dGDP + ATP = dGTP + ADP. It catalyses the reaction dTDP + ATP = dTTP + ADP. The catalysed reaction is dADP + GTP = dATP + GDP. Functionally, broad-specificity nucleoside phosphate kinase involved in cellular nucleotide homeostasis by catalyzing nucleoside-phosphate interconversions. Similar to other adenylate kinases, preferentially catalyzes the phosphorylation of the nucleoside monophosphate AMP with ATP as phosphate donor to produce ADP. In vitro, can also catalyze the phosphorylation of CMP, dAMP and dCMP and use GTP as an alternate phosphate donor. Moreover, exhibits a diphosphate kinase activity, producing ATP, CTP, GTP, UTP, TTP, dATP, dCTP and dGTP from the corresponding diphosphate substrates with either ATP or GTP as phosphate donors. For this activity shows the following substrate preference CDP &gt; UDP &gt; ADP &gt; TDP. This chain is Adenylate kinase 9, found in Homo sapiens (Human).